Reading from the N-terminus, the 250-residue chain is Pyridoxine 5'-phosphate synthase (250 aa).

2 residues coordinate 3-amino-2-oxopropyl phosphate: Asn8 and Arg19. His44 serves as the catalytic Proton acceptor. Residues Arg46 and His51 each coordinate 1-deoxy-D-xylulose 5-phosphate. The Proton acceptor role is filled by Glu76. Thr106 contributes to the 1-deoxy-D-xylulose 5-phosphate binding site. The active-site Proton donor is His200. 3-amino-2-oxopropyl phosphate contacts are provided by residues Asp201 and 223-224 (GH).

Belongs to the PNP synthase family. In terms of assembly, homooctamer; tetramer of dimers.

The protein resides in the cytoplasm. The catalysed reaction is 3-amino-2-oxopropyl phosphate + 1-deoxy-D-xylulose 5-phosphate = pyridoxine 5'-phosphate + phosphate + 2 H2O + H(+). It participates in cofactor biosynthesis; pyridoxine 5'-phosphate biosynthesis; pyridoxine 5'-phosphate from D-erythrose 4-phosphate: step 5/5. Its function is as follows. Catalyzes the complicated ring closure reaction between the two acyclic compounds 1-deoxy-D-xylulose-5-phosphate (DXP) and 3-amino-2-oxopropyl phosphate (1-amino-acetone-3-phosphate or AAP) to form pyridoxine 5'-phosphate (PNP) and inorganic phosphate. The sequence is that of Pyridoxine 5'-phosphate synthase from Rhizobium meliloti (strain 1021) (Ensifer meliloti).